We begin with the raw amino-acid sequence, 367 residues long: Heme A synthase (367 aa).

5 helical membrane-spanning segments follow: residues 25 to 45 (ALRL…LVGG), 111 to 131 (LIAR…WLTG), 139 to 159 (WPLV…WWMV), 174 to 194 (LATH…IMRG), and 210 to 230 (GFAA…ALVA). Histidine 274 lines the heme pocket. 3 helical membrane passes run 276 to 296 (IGAY…LRAA), 305 to 325 (AVVL…TLLM), and 327 to 347 (VPLH…GFAV). Residue histidine 335 coordinates heme.

This sequence belongs to the COX15/CtaA family. Type 2 subfamily. In terms of assembly, interacts with CtaB. It depends on heme b as a cofactor.

The protein resides in the cell membrane. It carries out the reaction Fe(II)-heme o + 2 A + H2O = Fe(II)-heme a + 2 AH2. It functions in the pathway porphyrin-containing compound metabolism; heme A biosynthesis; heme A from heme O: step 1/1. Its function is as follows. Catalyzes the conversion of heme O to heme A by two successive hydroxylations of the methyl group at C8. The first hydroxylation forms heme I, the second hydroxylation results in an unstable dihydroxymethyl group, which spontaneously dehydrates, resulting in the formyl group of heme A. In Rhizobium etli (strain CIAT 652), this protein is Heme A synthase.